A 665-amino-acid chain; its full sequence is DNA ligase (665 aa).

Residues 31-35 (DKEFD), 80-81 (SL), and Glu110 each bind NAD(+). Residue Lys112 is the N6-AMP-lysine intermediate of the active site. NAD(+) contacts are provided by Arg133, Glu170, Lys285, and Lys309. Zn(2+) contacts are provided by Cys403, Cys406, Cys421, and Cys427. The region spanning 587–665 (GHTDKLAGQS…NEEEFLKLIS (79 aa)) is the BRCT domain.

The protein belongs to the NAD-dependent DNA ligase family. LigA subfamily. Mg(2+) is required as a cofactor. Requires Mn(2+) as cofactor.

The enzyme catalyses NAD(+) + (deoxyribonucleotide)n-3'-hydroxyl + 5'-phospho-(deoxyribonucleotide)m = (deoxyribonucleotide)n+m + AMP + beta-nicotinamide D-nucleotide.. Its function is as follows. DNA ligase that catalyzes the formation of phosphodiester linkages between 5'-phosphoryl and 3'-hydroxyl groups in double-stranded DNA using NAD as a coenzyme and as the energy source for the reaction. It is essential for DNA replication and repair of damaged DNA. This Bacteroides fragilis (strain ATCC 25285 / DSM 2151 / CCUG 4856 / JCM 11019 / LMG 10263 / NCTC 9343 / Onslow / VPI 2553 / EN-2) protein is DNA ligase.